We begin with the raw amino-acid sequence, 195 residues long: UDP-N-acetylbacillosamine N-acetyltransferase (195 aa).

Substrate is bound by residues 13–15, 35–36, and glycine 56; these read SGH and DD. The active-site Proton acceptor is histidine 125. 3 residues coordinate acetyl-CoA: histidine 134, isoleucine 155, and glycine 173.

This sequence belongs to the transferase hexapeptide repeat family. Homotrimer.

The enzyme catalyses UDP-N-acetylbacillosamine + acetyl-CoA = UDP-N,N'-diacetylbacillosamine + CoA + H(+). It functions in the pathway protein modification; protein glycosylation. Its function is as follows. Acetyltransferase that modifies the UDP-4-amino-sugar to form UDP-N,N'-diacetylbacillosamine in the N-linked protein glycosylation pathway. The polypeptide is UDP-N-acetylbacillosamine N-acetyltransferase (pglD) (Campylobacter jejuni subsp. jejuni serotype O:2 (strain ATCC 700819 / NCTC 11168)).